A 352-amino-acid chain; its full sequence is Anthranilate phosphoribosyltransferase (352 aa).

5-phospho-alpha-D-ribose 1-diphosphate contacts are provided by residues Gly83, 86–87 (GD), Thr91, 93–96 (NIST), 111–119 (KHGGRSVSS), and Ala123. Position 83 (Gly83) interacts with anthranilate. Residue Ser95 coordinates Mg(2+). Position 169 (Arg169) interacts with anthranilate. 2 residues coordinate Mg(2+): Asp228 and Glu229.

Belongs to the anthranilate phosphoribosyltransferase family. As to quaternary structure, homodimer. Requires Mg(2+) as cofactor.

The enzyme catalyses N-(5-phospho-beta-D-ribosyl)anthranilate + diphosphate = 5-phospho-alpha-D-ribose 1-diphosphate + anthranilate. It participates in amino-acid biosynthesis; L-tryptophan biosynthesis; L-tryptophan from chorismate: step 2/5. In terms of biological role, catalyzes the transfer of the phosphoribosyl group of 5-phosphorylribose-1-pyrophosphate (PRPP) to anthranilate to yield N-(5'-phosphoribosyl)-anthranilate (PRA). The chain is Anthranilate phosphoribosyltransferase from Neisseria meningitidis serogroup C (strain 053442).